The primary structure comprises 393 residues: tRNA(Met) cytidine acetate ligase (393 aa).

ATP-binding residues include G81, N142, and R167.

The protein belongs to the TmcAL family.

It is found in the cytoplasm. The catalysed reaction is cytidine(34) in elongator tRNA(Met) + acetate + ATP = N(4)-acetylcytidine(34) in elongator tRNA(Met) + AMP + diphosphate. Functionally, catalyzes the formation of N(4)-acetylcytidine (ac(4)C) at the wobble position of elongator tRNA(Met), using acetate and ATP as substrates. First activates an acetate ion to form acetyladenylate (Ac-AMP) and then transfers the acetyl group to tRNA to form ac(4)C34. This Bacillus cereus (strain ATCC 14579 / DSM 31 / CCUG 7414 / JCM 2152 / NBRC 15305 / NCIMB 9373 / NCTC 2599 / NRRL B-3711) protein is tRNA(Met) cytidine acetate ligase.